The primary structure comprises 243 residues: 1-(5-phosphoribosyl)-5-[(5-phosphoribosylamino)methylideneamino] imidazole-4-carboxamide isomerase (243 aa).

Aspartate 8 serves as the catalytic Proton acceptor. Aspartate 130 acts as the Proton donor in catalysis.

This sequence belongs to the HisA/HisF family.

It is found in the cytoplasm. It catalyses the reaction 1-(5-phospho-beta-D-ribosyl)-5-[(5-phospho-beta-D-ribosylamino)methylideneamino]imidazole-4-carboxamide = 5-[(5-phospho-1-deoxy-D-ribulos-1-ylimino)methylamino]-1-(5-phospho-beta-D-ribosyl)imidazole-4-carboxamide. The protein operates within amino-acid biosynthesis; L-histidine biosynthesis; L-histidine from 5-phospho-alpha-D-ribose 1-diphosphate: step 4/9. This chain is 1-(5-phosphoribosyl)-5-[(5-phosphoribosylamino)methylideneamino] imidazole-4-carboxamide isomerase, found in Acinetobacter baylyi (strain ATCC 33305 / BD413 / ADP1).